Reading from the N-terminus, the 219-residue chain is Probable nicotinate-nucleotide adenylyltransferase (219 aa).

Belongs to the NadD family.

It carries out the reaction nicotinate beta-D-ribonucleotide + ATP + H(+) = deamido-NAD(+) + diphosphate. The protein operates within cofactor biosynthesis; NAD(+) biosynthesis; deamido-NAD(+) from nicotinate D-ribonucleotide: step 1/1. Its function is as follows. Catalyzes the reversible adenylation of nicotinate mononucleotide (NaMN) to nicotinic acid adenine dinucleotide (NaAD). This chain is Probable nicotinate-nucleotide adenylyltransferase, found in Enterococcus faecalis (strain ATCC 700802 / V583).